A 208-amino-acid chain; its full sequence is Large ribosomal subunit protein uL3 (208 aa).

The disordered stretch occupies residues 116–148; that stretch reads GFQGVIKRHGQSRGPMAHGSRYHRRPGSMGPVA.

It belongs to the universal ribosomal protein uL3 family. In terms of assembly, part of the 50S ribosomal subunit. Forms a cluster with proteins L14 and L19.

Functionally, one of the primary rRNA binding proteins, it binds directly near the 3'-end of the 23S rRNA, where it nucleates assembly of the 50S subunit. The polypeptide is Large ribosomal subunit protein uL3 (Streptococcus agalactiae serotype Ia (strain ATCC 27591 / A909 / CDC SS700)).